Consider the following 96-residue polypeptide: Large ribosomal subunit protein bL21 (96 aa).

It belongs to the bacterial ribosomal protein bL21 family. In terms of assembly, part of the 50S ribosomal subunit. Contacts protein L20.

In terms of biological role, this protein binds to 23S rRNA in the presence of protein L20. The chain is Large ribosomal subunit protein bL21 from Chlorobium phaeobacteroides (strain BS1).